Consider the following 338-residue polypeptide: GTPase Obg (338 aa).

In terms of domain architecture, Obg spans 1 to 159 (MSFIDEVKIN…RWIRMELKLM (159 aa)). A disordered region spans residues 58 to 79 (DLRQHPHQKAGRGKNGMGSDRH). One can recognise an OBG-type G domain in the interval 160–331 (ADVGLLGMPS…LLDDIAFNLW (172 aa)). GTP-binding positions include 166–173 (GMPSVGKS), 191–195 (FTTLK), 213–216 (DIPG), 283–286 (NKID), and 312–314 (SAA). Mg(2+)-binding residues include Ser173 and Thr193.

It belongs to the TRAFAC class OBG-HflX-like GTPase superfamily. OBG GTPase family. In terms of assembly, monomer. Mg(2+) serves as cofactor.

Its subcellular location is the cytoplasm. In terms of biological role, an essential GTPase which binds GTP, GDP and possibly (p)ppGpp with moderate affinity, with high nucleotide exchange rates and a fairly low GTP hydrolysis rate. Plays a role in control of the cell cycle, stress response, ribosome biogenesis and in those bacteria that undergo differentiation, in morphogenesis control. The protein is GTPase Obg of Citrifermentans bemidjiense (strain ATCC BAA-1014 / DSM 16622 / JCM 12645 / Bem) (Geobacter bemidjiensis).